The primary structure comprises 86 residues: Anti-adapter protein IraP (86 aa).

Residues 1–36 (MKNLIAELLFKLAQKEEESKELCAQVEALEIIVTAM) are a coiled coil.

It belongs to the IraP family. Interacts with RssB.

Its subcellular location is the cytoplasm. In terms of biological role, inhibits RpoS proteolysis by regulating RssB activity, thereby increasing the stability of the sigma stress factor RpoS especially during phosphate starvation, but also in stationary phase and during nitrogen starvation. Its effect on RpoS stability is due to its interaction with RssB, which probably blocks the interaction of RssB with RpoS, and the consequent delivery of the RssB-RpoS complex to the ClpXP protein degradation pathway. This is Anti-adapter protein IraP from Escherichia coli (strain SE11).